Reading from the N-terminus, the 960-residue chain is MLLLLLVPLFLRPLGAGGAQTPNVTSEGCQIIHPPWEGGIRYRGLTRDQVKAINFLPVDYEIEYVCRGEREVVGPKVRKCLANGSWTDMDTPSRCVRICSKSYLTLENGKVFLTGGDLPALDGARVDFRCDPDFHLVGSSRSICSQGQWSTPKPHCQVNRTPHSERRAVYIGALFPMSGGWPGGQACQPAVEMALEDVNSRRDILPDYELKLIHHDSKCDPGQATKYLYELLYNDPIKIILMPGCSSVSTLVAEAARMWNLIVLSYGSSSPALSNRQRFPTFFRTHPSATLHNPTRVKLFEKWGWKKIATIQQTTEVFTSTLDDLEERVKEAGIEITFRQSFFSDPAVPVKNLKRQDARIIVGLFYETEARKVFCEVYKERLFGKKYVWFLIGWYADNWFKTYDPSINCTVEEMTEAVEGHITTEIVMLNPANTRSISNMTSQEFVEKLTKRLKRHPEETGGFQEAPLAYDAIWALALALNKTSGGGGRSGVRLEDFNYNNQTITDQIYRAMNSSSFEGVSGHVVFDASGSRMAWTLIEQLQGGSYKKIGYYDSTKDDLSWSKTDKWIGGSPPADQTLVIKTFRFLSQKLFISVSVLSSLGIVLAVVCLSFNIYNSHVRYIQNSQPNLNNLTAVGCSLALAAVFPLGLDGYHIGRSQFPFVCQARLWLLGLGFSLGYGSMFTKIWWVHTVFTKKEEKKEWRKTLEPWKLYATVGLLVGMDILTLAIWQIVDPLHRTIETFAKEEPKEDIDVSILPQLEHCSSKKMNTWLGIFYGYKGLLLLLGIFLAYETKSVSTEKINDHRAVGMAIYNVAVLCLITAPVTMILSSQQDAAFAFASLAIVFSSYITLVVLFVPKMRRLITRGEWQSEAQDTMKTGSSTNNNEEEKSRLLEKENRELEKIIAEKEERVSELRHQLQSRQQIRSRRHPPTPPDPSGGLPRGPSEPPDRLSCDGSRVHLLYK.

The signal sequence occupies residues 1-19 (MLLLLLVPLFLRPLGAGGA). Residues 20–590 (QTPNVTSEGC…KTFRFLSQKL (571 aa)) are Extracellular-facing. 2 N-linked (GlcNAc...) asparagine glycosylation sites follow: N23 and N83. Sushi domains follow at residues 29–95 (CQII…PSRC) and 97–158 (RICS…HCQV). 3 cysteine pairs are disulfide-bonded: C99–C144, C130–C156, and C219–C245. The 4-aminobutanoate site is built by S246, S269, H286, and Y366. A disulfide bridge connects residues C375 and C409. Residues N408 and N439 are each glycosylated (N-linked (GlcNAc...) asparagine). Position 465 (E465) interacts with 4-aminobutanoate. N481, N501, and N513 each carry an N-linked (GlcNAc...) asparagine glycan. The helical transmembrane segment at 591-611 (FISVSVLSSLGIVLAVVCLSF) threads the bilayer. Topologically, residues 612–630 (NIYNSHVRYIQNSQPNLNN) are cytoplasmic. A helical membrane pass occupies residues 631 to 651 (LTAVGCSLALAAVFPLGLDGY). Residues 652 to 666 (HIGRSQFPFVCQARL) lie on the Extracellular side of the membrane. A helical transmembrane segment spans residues 667 to 687 (WLLGLGFSLGYGSMFTKIWWV). The Cytoplasmic segment spans residues 688–709 (HTVFTKKEEKKEWRKTLEPWKL). The helical transmembrane segment at 710-730 (YATVGLLVGMDILTLAIWQIV) threads the bilayer. Residues 731–767 (DPLHRTIETFAKEEPKEDIDVSILPQLEHCSSKKMNT) are Extracellular-facing. A helical transmembrane segment spans residues 768 to 788 (WLGIFYGYKGLLLLLGIFLAY). Residues 789–803 (ETKSVSTEKINDHRA) are Cytoplasmic-facing. A helical membrane pass occupies residues 804–824 (VGMAIYNVAVLCLITAPVTMI). Residues 825 to 832 (LSSQQDAA) are Extracellular-facing. A helical transmembrane segment spans residues 833–853 (FAFASLAIVFSSYITLVVLFV). Residues 854-960 (PKMRRLITRG…DGSRVHLLYK (107 aa)) are Cytoplasmic-facing. Disordered stretches follow at residues 866 to 891 (QSEA…RLLE) and 908 to 960 (VSEL…LLYK). Polar residues predominate over residues 867–879 (SEAQDTMKTGSST). Residues 868–924 (EAQDTMKTGSSTNNNEEEKSRLLEKENRELEKIIAEKEERVSELRHQLQSRQQIRSR) adopt a coiled-coil conformation. T872 is modified (phosphothreonine). Residues 887-915 (SRLLEKENRELEKIIAEKEERVSELRHQL) are interaction with ATF4. The residue at position 929 (T929) is a Phosphothreonine.

This sequence belongs to the G-protein coupled receptor 3 family. GABA-B receptor subfamily. Heterodimer of GABBR1 and GABBR2. Homodimers may form, but are inactive. Interacts (via C-terminus) with ATF4 (via leucine zipper domain). Interacts with JAKMIP1. Interacts with KCTD8, KCTD12, KCTD12B and KCTD16; this interaction determines the pharmacology and kinetics of the receptor response, the KCTD proteins markedly accelerating the GABA-B response, although to different extents. As to expression, expressed in neuronal tissue including cortex, cerebellum and spinal cord. Not detected in non-neuronal tissues including heart, liver, spleen and kidney.

The protein resides in the cell membrane. The protein localises to the postsynaptic cell membrane. It is found in the cell projection. It localises to the dendrite. Functionally, component of a heterodimeric G-protein coupled receptor for GABA, formed by GABBR1 and GABBR2. Within the heterodimeric GABA receptor, only GABBR1 seems to bind agonists, while GABBR2 mediates coupling to G proteins. Ligand binding causes a conformation change that triggers signaling via guanine nucleotide-binding proteins (G proteins) and modulates the activity of down-stream effectors, such as adenylate cyclase. Signaling inhibits adenylate cyclase, stimulates phospholipase A2, activates potassium channels, inactivates voltage-dependent calcium-channels and modulates inositol phospholipid hydrolysis. Calcium is required for high affinity binding to GABA. Plays a critical role in the fine-tuning of inhibitory synaptic transmission. Pre-synaptic GABA receptor inhibits neurotransmitter release by down-regulating high-voltage activated calcium channels, whereas postsynaptic GABA receptor decreases neuronal excitability by activating a prominent inwardly rectifying potassium (Kir) conductance that underlies the late inhibitory postsynaptic potentials. Not only implicated in synaptic inhibition but also in hippocampal long-term potentiation, slow wave sleep, muscle relaxation and antinociception. This chain is Gamma-aminobutyric acid type B receptor subunit 1 (Gabbr1), found in Mus musculus (Mouse).